The primary structure comprises 79 residues: uncharacterized protein (79 aa).

The next 2 membrane-spanning stretches (helical) occupy residues 18-38 (IWII…IVLI) and 50-70 (GITF…FFLF).

Its subcellular location is the host membrane. This is an uncharacterized protein from Spiroplasma virus SpV1-R8A2 B (SpV1).